Consider the following 295-residue polypeptide: Proline-rich proteoglycan 2 (295 aa).

A signal peptide spans 1–16 (MLVVLLTAALLVLSSA). A disordered region spans residues 16-295 (AQGVDEEVVY…QSSFLWSFSA (280 aa)). Over residues 26–41 (EDSSQQLELEQQSQGH) the composition is skewed to low complexity. The segment covering 48–58 (PPPGGLPPRPP) has biased composition (pro residues). Positions 62-78 (ENGDGDDNDDGDDDGSG) are enriched in acidic residues. Pro residues-rich tracts occupy residues 100–187 (PPPA…PPGG) and 194–278 (QGPP…PQGP).

Contains glycosaminoglycans of chondroitin-sulfate and heparan types.

The protein localises to the secreted. The sequence is that of Proline-rich proteoglycan 2 (Prpg2) from Rattus norvegicus (Rat).